The primary structure comprises 194 residues: MSTRSVRKIRETKETKIELYLDIDKKGEVKVSTPVNFLNHMLSTLFYYMNSTATLIAEDKQNFDDHHVVEDTAIVIGEAFKEALGDKKGIRRFSHQIIPMDDALVLVAVDISGRGVSNIELNLERDEIGGLATENIIHFFQTFSYNSGVNMHIIQLRGWNTHHVIEASFKGLGFSLYEASRIVYEETYSLKGSL.

This sequence belongs to the imidazoleglycerol-phosphate dehydratase family.

It is found in the cytoplasm. The catalysed reaction is D-erythro-1-(imidazol-4-yl)glycerol 3-phosphate = 3-(imidazol-4-yl)-2-oxopropyl phosphate + H2O. It participates in amino-acid biosynthesis; L-histidine biosynthesis; L-histidine from 5-phospho-alpha-D-ribose 1-diphosphate: step 6/9. This chain is Imidazoleglycerol-phosphate dehydratase, found in Sulfurisphaera tokodaii (strain DSM 16993 / JCM 10545 / NBRC 100140 / 7) (Sulfolobus tokodaii).